The following is a 288-amino-acid chain: Syntaxin-1B (288 aa).

Basic and acidic residues predominate over residues 1–13 (MKDRTQELRSAKD). Residues 1-20 (MKDRTQELRSAKDSDDEEEV) are disordered. Residues 1–264 (MKDRTQELRS…KYQSKARRKK (264 aa)) lie on the Cytoplasmic side of the membrane. A phosphoserine mark is found at S10 and S14. The stretch at 29 to 104 (MDEFFEQVEE…IEQSIEQEEG (76 aa)) forms a coiled coil. One can recognise a t-SNARE coiled-coil homology domain in the interval 191-253 (LNEIETRHNE…ERAVSDTKKA (63 aa)). Residues 265–288 (IMIIICCVVLGVVLASSIGGTLGL) traverse the membrane as a helical; Anchor for type IV membrane protein segment.

Belongs to the syntaxin family. As to quaternary structure, interacts with OTOF. Interacts with SYT6 and SYT8; the interaction is Ca(2+)-dependent. In terms of processing, phosphorylated by CK2. Post-translationally, (Microbial infection) Targeted and hydrolyzed by C.botulinum neurotoxin type C (BoNT/C); cleavage by BoNT/C inhibits neurotransmitter release. Probably hydrolyzes the 252-Lys-|-Ala-253 bond.

The protein localises to the membrane. Its function is as follows. Potentially involved in docking of synaptic vesicles at presynaptic active zones. May mediate Ca(2+)-regulation of exocytosis acrosomal reaction in sperm. This chain is Syntaxin-1B (STX1B), found in Bos taurus (Bovine).